Reading from the N-terminus, the 201-residue chain is Small ribosomal subunit protein eS1 (201 aa).

It belongs to the eukaryotic ribosomal protein eS1 family.

This chain is Small ribosomal subunit protein eS1, found in Methanoregula boonei (strain DSM 21154 / JCM 14090 / 6A8).